Reading from the N-terminus, the 384-residue chain is S-adenosylmethionine synthase (384 aa).

ATP is bound at residue His15. Asp17 provides a ligand contact to Mg(2+). Residue Glu43 participates in K(+) binding. L-methionine contacts are provided by Glu56 and Gln99. Residues 99–109 form a flexible loop region; it reads QSPDINQGVDR. ATP-binding positions include 164–166, 230–231, Asp239, 245–246, Ala262, and Lys266; these read DAK, RF, and RK. Asp239 contributes to the L-methionine binding site. L-methionine is bound at residue Lys270.

Belongs to the AdoMet synthase family. Homotetramer; dimer of dimers. Mg(2+) is required as a cofactor. The cofactor is K(+).

It localises to the cytoplasm. It carries out the reaction L-methionine + ATP + H2O = S-adenosyl-L-methionine + phosphate + diphosphate. Its pathway is amino-acid biosynthesis; S-adenosyl-L-methionine biosynthesis; S-adenosyl-L-methionine from L-methionine: step 1/1. Catalyzes the formation of S-adenosylmethionine (AdoMet) from methionine and ATP. The overall synthetic reaction is composed of two sequential steps, AdoMet formation and the subsequent tripolyphosphate hydrolysis which occurs prior to release of AdoMet from the enzyme. The chain is S-adenosylmethionine synthase from Klebsiella pneumoniae subsp. pneumoniae (strain ATCC 700721 / MGH 78578).